The primary structure comprises 637 residues: Chaperone protein HtpG (637 aa).

The a; substrate-binding stretch occupies residues 1–345 (MSQQETHGFQ…SNDLPLNVSR (345 aa)). The segment at 346–562 (EILQDNHITK…EGEMSTQMIK (217 aa)) is b. The interval 563–637 (LMQAAGQPVP…MNQMLLANLK (75 aa)) is c.

This sequence belongs to the heat shock protein 90 family. In terms of assembly, homodimer.

The protein localises to the cytoplasm. Its function is as follows. Molecular chaperone. Has ATPase activity. The sequence is that of Chaperone protein HtpG from Shewanella oneidensis (strain ATCC 700550 / JCM 31522 / CIP 106686 / LMG 19005 / NCIMB 14063 / MR-1).